A 467-amino-acid polypeptide reads, in one-letter code: Glutamine synthetase (467 aa).

Residues 11–95 enclose the GS beta-grasp domain; it reads HDVKWIDLRF…IVCDIIEPST (85 aa). Residues 103 to 467 enclose the GS catalytic domain; sequence PRAIARRAEE…PLEYDLYYSV (365 aa). Mg(2+) is bound by residues Glu128 and Glu130. Glu206 is an ATP binding site. Residues Glu211 and Glu219 each contribute to the Mg(2+) site. L-glutamate-binding positions include 263-264 and Gly264; that span reads NG. A Mg(2+)-binding site is contributed by His268. Residues 270–272 and Ser272 each bind ATP; that span reads HMS. Positions 320, 326, and 338 each coordinate L-glutamate. Arg338, Arg343, and Lys351 together coordinate ATP. A Mg(2+)-binding site is contributed by Glu356. Arg358 contributes to the L-glutamate binding site. O-AMP-tyrosine is present on Tyr396.

The protein belongs to the glutamine synthetase family. In terms of assembly, oligomer of 12 subunits arranged in the form of two hexameric ring. It depends on Mg(2+) as a cofactor.

It is found in the cytoplasm. The catalysed reaction is L-glutamate + NH4(+) + ATP = L-glutamine + ADP + phosphate + H(+). With respect to regulation, the activity of this enzyme could be controlled by adenylation under conditions of abundant glutamine. Catalyzes the ATP-dependent biosynthesis of glutamine from glutamate and ammonia. This Azotobacter vinelandii protein is Glutamine synthetase.